Consider the following 219-residue polypeptide: Lipoprotein-releasing system ATP-binding protein LolD (219 aa).

Positions Ile3 to Glu219 constitute an ABC transporter domain. ATP is bound at residue Gly35–Thr42.

This sequence belongs to the ABC transporter superfamily. Lipoprotein translocase (TC 3.A.1.125) family. As to quaternary structure, the complex is composed of two ATP-binding proteins (LolD) and two transmembrane proteins (LolC and LolE).

It localises to the cell inner membrane. In terms of biological role, part of the ABC transporter complex LolCDE involved in the translocation of mature outer membrane-directed lipoproteins, from the inner membrane to the periplasmic chaperone, LolA. Responsible for the formation of the LolA-lipoprotein complex in an ATP-dependent manner. The protein is Lipoprotein-releasing system ATP-binding protein LolD of Porphyromonas gingivalis (strain ATCC BAA-308 / W83).